Reading from the N-terminus, the 202-residue chain is uncharacterized protein (202 aa).

This is an uncharacterized protein from Pseudanabaena tenuis (strain PCC 7409).